Consider the following 30-residue polypeptide: L-amino-acid oxidase (30 aa).

Belongs to the flavin monoamine oxidase family. FIG1 subfamily. In terms of assembly, monomer. This is in contrast with most of its orthologs, that are non-covalently linked homodimers. FAD serves as cofactor. In terms of processing, N-glycosylated. In terms of tissue distribution, expressed by the venom gland.

Its subcellular location is the secreted. The enzyme catalyses an L-alpha-amino acid + O2 + H2O = a 2-oxocarboxylate + H2O2 + NH4(+). The catalysed reaction is L-leucine + O2 + H2O = 4-methyl-2-oxopentanoate + H2O2 + NH4(+). It catalyses the reaction L-phenylalanine + O2 + H2O = 3-phenylpyruvate + H2O2 + NH4(+). It carries out the reaction L-tryptophan + O2 + H2O = indole-3-pyruvate + H2O2 + NH4(+). The enzyme catalyses L-methionine + O2 + H2O = 4-methylsulfanyl-2-oxobutanoate + H2O2 + NH4(+). The catalysed reaction is L-2-aminohexanoate + O2 + H2O = 2-oxohexanoate + H2O2 + NH4(+). It catalyses the reaction L-tyrosine + O2 + H2O = 3-(4-hydroxyphenyl)pyruvate + H2O2 + NH4(+). Functionally, catalyzes an oxidative deamination of predominantly hydrophobic and aromatic L-amino acids, thus producing hydrogen peroxide that may contribute to the diverse toxic effects of this enzyme. Is highly active against L-Met, L-Leu, L-norleucine (L-2-aminohexanoate), L-Trp, L-Phe, moderately active against L-Tyr, and no active on L-Gly, L-Ala, L-Val, L-Pro, L-His, L-Lys, L-Arg, L-Asp, L-Asn, L-Gln, L-Glu, L-Ser, and L-Thr. Exhibits diverse biological activities, such as hemorrhage, hemolysis, edema, antibacterial and antiparasitic activities. In addition, this protein induces apoptosis. It also interacts with endothelial cells, and inhibits collagen- and ADP-induced platelet aggregation. L-LAAO family effects on platelets are controversial, since it either induces aggregation or inhibits agonist-induced aggregation. These different effects are probably due to different experimental conditions. This is L-amino-acid oxidase from Bothrops leucurus (Whitetail lancehead).